A 255-amino-acid polypeptide reads, in one-letter code: Small ribosomal subunit protein eS1 (255 aa).

At A2 the chain carries N-acetylalanine; partial.

It belongs to the eukaryotic ribosomal protein eS1 family. Component of the small ribosomal subunit. Mature ribosomes consist of a small (40S) and a large (60S) subunit. The 40S subunit contains about 33 different proteins and 1 molecule of RNA (18S). The 60S subunit contains about 49 different proteins and 3 molecules of RNA (25S, 5.8S and 5S).

Its subcellular location is the cytoplasm. The sequence is that of Small ribosomal subunit protein eS1 from Candida glabrata (strain ATCC 2001 / BCRC 20586 / JCM 3761 / NBRC 0622 / NRRL Y-65 / CBS 138) (Yeast).